The chain runs to 86 residues: MKTINTVVAAMALSTLSFGVFAAEPVTASQAQNMNKIGVVSADGASTLDALEAKLAEKAAAAGASGYSITSATNNNKLSGTAVIYK.

The N-terminal stretch at methionine 1 to alanine 22 is a signal peptide.

This sequence belongs to the BhsA/McbA family.

Its subcellular location is the periplasm. This is an uncharacterized protein from Escherichia coli O6:H1 (strain CFT073 / ATCC 700928 / UPEC).